Consider the following 240-residue polypeptide: Small ribosomal subunit protein eS4 (240 aa).

Residues 37 to 99 (VPLVVLLRDV…RGEFFRVFPD (63 aa)) form the S4 RNA-binding domain.

Belongs to the eukaryotic ribosomal protein eS4 family.

The polypeptide is Small ribosomal subunit protein eS4 (Halorubrum lacusprofundi (strain ATCC 49239 / DSM 5036 / JCM 8891 / ACAM 34)).